The chain runs to 108 residues: Pyrimidine/purine nucleoside phosphorylase (108 aa).

It belongs to the nucleoside phosphorylase PpnP family.

It carries out the reaction a purine D-ribonucleoside + phosphate = a purine nucleobase + alpha-D-ribose 1-phosphate. The enzyme catalyses adenosine + phosphate = alpha-D-ribose 1-phosphate + adenine. It catalyses the reaction cytidine + phosphate = cytosine + alpha-D-ribose 1-phosphate. The catalysed reaction is guanosine + phosphate = alpha-D-ribose 1-phosphate + guanine. It carries out the reaction inosine + phosphate = alpha-D-ribose 1-phosphate + hypoxanthine. The enzyme catalyses thymidine + phosphate = 2-deoxy-alpha-D-ribose 1-phosphate + thymine. It catalyses the reaction uridine + phosphate = alpha-D-ribose 1-phosphate + uracil. The catalysed reaction is xanthosine + phosphate = alpha-D-ribose 1-phosphate + xanthine. Functionally, catalyzes the phosphorolysis of diverse nucleosides, yielding D-ribose 1-phosphate and the respective free bases. Can use uridine, adenosine, guanosine, cytidine, thymidine, inosine and xanthosine as substrates. Also catalyzes the reverse reactions. This chain is Pyrimidine/purine nucleoside phosphorylase, found in Acinetobacter baylyi (strain ATCC 33305 / BD413 / ADP1).